The primary structure comprises 663 residues: Dual specificity protein phosphatase 8 (663 aa).

The Rhodanese domain maps to Gly23–Glu138. Residues Gly160 to Leu302 form the Tyrosine-protein phosphatase domain. The Phosphocysteine intermediate role is filled by Cys246. 2 disordered regions span residues Leu313–Pro367 and Tyr404–Arg624. Composition is skewed to low complexity over residues Ser334–Ser353, Leu427–Val448, and Ser546–Ser557. Positions Ser558 to Ser577 are enriched in gly residues. Residues Ser578–Ser600 show a composition bias toward low complexity.

Belongs to the protein-tyrosine phosphatase family. Non-receptor class dual specificity subfamily. In terms of assembly, monomer. Expressed predominantly in brain and lung.

The protein resides in the cytoplasm. It is found in the nucleus. The catalysed reaction is O-phospho-L-tyrosyl-[protein] + H2O = L-tyrosyl-[protein] + phosphate. It carries out the reaction O-phospho-L-seryl-[protein] + H2O = L-seryl-[protein] + phosphate. It catalyses the reaction O-phospho-L-threonyl-[protein] + H2O = L-threonyl-[protein] + phosphate. In terms of biological role, has phosphatase activity with synthetic phosphatase substrates and negatively regulates mitogen-activated protein kinase activity, presumably by catalysing their dephosphorylation. Expected to display protein phosphatase activity toward phosphotyrosine, phosphoserine and phosphothreonine residues. The polypeptide is Dual specificity protein phosphatase 8 (Dusp8) (Mus musculus (Mouse)).